The following is a 155-amino-acid chain: Small ribosomal subunit protein uS7 (155 aa).

It belongs to the universal ribosomal protein uS7 family. In terms of assembly, part of the 30S ribosomal subunit. Contacts proteins S9 and S11.

In terms of biological role, one of the primary rRNA binding proteins, it binds directly to 16S rRNA where it nucleates assembly of the head domain of the 30S subunit. Is located at the subunit interface close to the decoding center, probably blocks exit of the E-site tRNA. This is Small ribosomal subunit protein uS7 from Halorhodospira halophila (strain DSM 244 / SL1) (Ectothiorhodospira halophila (strain DSM 244 / SL1)).